Consider the following 283-residue polypeptide: Hydroxyacylglutathione hydrolase-like protein (283 aa).

The Zn(2+) site is built by His-54, His-56, Asp-58, His-59, His-110, Asp-134, and His-173.

This sequence belongs to the metallo-beta-lactamase superfamily. Glyoxalase II family. Zn(2+) is required as a cofactor.

In terms of biological role, hydrolase acting on ester bonds. The sequence is that of Hydroxyacylglutathione hydrolase-like protein (Haghl) from Mus musculus (Mouse).